The sequence spans 408 residues: Arginine deiminase (408 aa).

Catalysis depends on Cys-397, which acts as the Amidino-cysteine intermediate.

It belongs to the arginine deiminase family.

It is found in the cytoplasm. It catalyses the reaction L-arginine + H2O = L-citrulline + NH4(+). It functions in the pathway amino-acid degradation; L-arginine degradation via ADI pathway; carbamoyl phosphate from L-arginine: step 1/2. The protein is Arginine deiminase of Listeria innocua serovar 6a (strain ATCC BAA-680 / CLIP 11262).